The following is a 231-amino-acid chain: Large ribosomal subunit protein uL1 (231 aa).

The protein belongs to the universal ribosomal protein uL1 family. As to quaternary structure, part of the 50S ribosomal subunit.

In terms of biological role, binds directly to 23S rRNA. The L1 stalk is quite mobile in the ribosome, and is involved in E site tRNA release. Its function is as follows. Protein L1 is also a translational repressor protein, it controls the translation of the L11 operon by binding to its mRNA. This chain is Large ribosomal subunit protein uL1, found in Methylocella silvestris (strain DSM 15510 / CIP 108128 / LMG 27833 / NCIMB 13906 / BL2).